A 53-amino-acid chain; its full sequence is U1-poneritoxin-Dq5a (53 aa).

Positions M1 to N23 are cleaved as a signal peptide. 3 cysteine pairs are disulfide-bonded: C25–C42, C32–C47, and C41–C52.

Expressed by the venom gland.

The protein resides in the secreted. In terms of biological role, may have neurotoxic activity. The polypeptide is U1-poneritoxin-Dq5a (Dinoponera quadriceps (South American ant)).